A 902-amino-acid polypeptide reads, in one-letter code: Protein translocase subunit SecA (902 aa).

ATP-binding positions include Gln87, 105–109 (GEGKT), and Asp512. A disordered region spans residues 851 to 902 (LARQQQLSHQAPVEELTQGSAAAAQEGRKVGRNDPCPCGSGKKFKHCHGKLQ). Positions 886, 888, 897, and 898 each coordinate Zn(2+). Basic residues predominate over residues 892-902 (KKFKHCHGKLQ).

Belongs to the SecA family. In terms of assembly, monomer and homodimer. Part of the essential Sec protein translocation apparatus which comprises SecA, SecYEG and auxiliary proteins SecDF-YajC and YidC. Zn(2+) is required as a cofactor.

It localises to the cell inner membrane. The protein resides in the cytoplasm. It carries out the reaction ATP + H2O + cellular proteinSide 1 = ADP + phosphate + cellular proteinSide 2.. Part of the Sec protein translocase complex. Interacts with the SecYEG preprotein conducting channel. Has a central role in coupling the hydrolysis of ATP to the transfer of proteins into and across the cell membrane, serving both as a receptor for the preprotein-SecB complex and as an ATP-driven molecular motor driving the stepwise translocation of polypeptide chains across the membrane. The chain is Protein translocase subunit SecA from Sodalis glossinidius (strain morsitans).